The primary structure comprises 86 residues: Cell division topological specificity factor (86 aa).

Belongs to the MinE family.

In terms of biological role, prevents the cell division inhibition by proteins MinC and MinD at internal division sites while permitting inhibition at polar sites. This ensures cell division at the proper site by restricting the formation of a division septum at the midpoint of the long axis of the cell. This Rhizobium johnstonii (strain DSM 114642 / LMG 32736 / 3841) (Rhizobium leguminosarum bv. viciae) protein is Cell division topological specificity factor.